The primary structure comprises 242 residues: Protein CDV3 homolog B (242 aa).

The segment covering Met1 to Lys15 has biased composition (basic and acidic residues). The interval Met1–Gln242 is disordered. Ala2 carries the N-acetylalanine modification. The segment covering Ala30–Lys57 has biased composition (low complexity). Residues Val59 to Glu75 are compositionally biased toward basic and acidic residues. The segment covering Lys105–Glu122 has biased composition (acidic residues). Composition is skewed to polar residues over residues Asp129–Ala143 and Ser183–Ala194. Residues Lys195–Lys213 show a composition bias toward basic and acidic residues.

The protein belongs to the CDV3 family.

It localises to the cytoplasm. The sequence is that of Protein CDV3 homolog B (cdv3-b) from Xenopus laevis (African clawed frog).